The sequence spans 566 residues: 2-isopropylmalate synthase (566 aa).

In terms of domain architecture, Pyruvate carboxyltransferase spans proline 32 to aspartate 306. The Mg(2+) site is built by aspartate 41, histidine 245, histidine 247, and asparagine 281. The interval proline 451–arginine 566 is regulatory domain.

It belongs to the alpha-IPM synthase/homocitrate synthase family. LeuA type 2 subfamily. As to quaternary structure, homodimer. Requires Mg(2+) as cofactor.

The protein localises to the cytoplasm. The enzyme catalyses 3-methyl-2-oxobutanoate + acetyl-CoA + H2O = (2S)-2-isopropylmalate + CoA + H(+). It participates in amino-acid biosynthesis; L-leucine biosynthesis; L-leucine from 3-methyl-2-oxobutanoate: step 1/4. Functionally, catalyzes the condensation of the acetyl group of acetyl-CoA with 3-methyl-2-oxobutanoate (2-ketoisovalerate) to form 3-carboxy-3-hydroxy-4-methylpentanoate (2-isopropylmalate). The chain is 2-isopropylmalate synthase from Mycobacterium ulcerans (strain Agy99).